The sequence spans 100 residues: Integration host factor subunit alpha (100 aa).

Belongs to the bacterial histone-like protein family. Heterodimer of an alpha and a beta chain.

Functionally, this protein is one of the two subunits of integration host factor, a specific DNA-binding protein that functions in genetic recombination as well as in transcriptional and translational control. In Ruegeria pomeroyi (strain ATCC 700808 / DSM 15171 / DSS-3) (Silicibacter pomeroyi), this protein is Integration host factor subunit alpha.